The following is a 381-amino-acid chain: Chaperone protein DnaJ (381 aa).

One can recognise a J domain in the interval 4-69 (DYYEILGVTR…QKRAAYDRFG (66 aa)). The segment at 135-213 (GKTAQINIPS…CQGTRRVEKN (79 aa)) adopts a CR-type zinc-finger fold. Residues Cys148, Cys151, Cys165, Cys168, Cys187, Cys190, Cys201, and Cys204 each coordinate Zn(2+). CXXCXGXG motif repeat units follow at residues 148–155 (CDACEGSG), 165–172 (CGTCHGAG), 187–194 (CPVCHGRG), and 201–208 (CPKCQGTR).

It belongs to the DnaJ family. As to quaternary structure, homodimer. The cofactor is Zn(2+).

It localises to the cytoplasm. Its function is as follows. Participates actively in the response to hyperosmotic and heat shock by preventing the aggregation of stress-denatured proteins and by disaggregating proteins, also in an autonomous, DnaK-independent fashion. Unfolded proteins bind initially to DnaJ; upon interaction with the DnaJ-bound protein, DnaK hydrolyzes its bound ATP, resulting in the formation of a stable complex. GrpE releases ADP from DnaK; ATP binding to DnaK triggers the release of the substrate protein, thus completing the reaction cycle. Several rounds of ATP-dependent interactions between DnaJ, DnaK and GrpE are required for fully efficient folding. Also involved, together with DnaK and GrpE, in the DNA replication of plasmids through activation of initiation proteins. This is Chaperone protein DnaJ from Bartonella henselae (strain ATCC 49882 / DSM 28221 / CCUG 30454 / Houston 1) (Rochalimaea henselae).